A 695-amino-acid polypeptide reads, in one-letter code: Elongation factor G (695 aa).

A tr-type G domain is found at 9 to 283; that stretch reads EKIRNIGIVA…AVIDYLPSPL (275 aa). GTP contacts are provided by residues 18–25, 82–86, and 136–139; these read AHIDAGKT, DTPGH, and NKMD.

The protein belongs to the TRAFAC class translation factor GTPase superfamily. Classic translation factor GTPase family. EF-G/EF-2 subfamily.

The protein localises to the cytoplasm. Its function is as follows. Catalyzes the GTP-dependent ribosomal translocation step during translation elongation. During this step, the ribosome changes from the pre-translocational (PRE) to the post-translocational (POST) state as the newly formed A-site-bound peptidyl-tRNA and P-site-bound deacylated tRNA move to the P and E sites, respectively. Catalyzes the coordinated movement of the two tRNA molecules, the mRNA and conformational changes in the ribosome. In Petrotoga mobilis (strain DSM 10674 / SJ95), this protein is Elongation factor G.